The primary structure comprises 897 residues: Probable bifunctional chitinase/lysozyme (897 aa).

A signal peptide spans 1–24 (MKLNIFTKSMIGMGLVCSALPALA). One can recognise a Chitin-binding type-3 1 domain in the interval 25 to 91 (MEAWNNQQGG…SQFGNTLSCE (67 aa)). Disordered stretches follow at residues 90-127 (CEKS…SNSS), 182-222 (TEIS…PADK), and 287-333 (QYGN…DSVN). A compositionally biased stretch (low complexity) spans 95-111 (SSSSSNSNTPASNTPAN). Polar residues-rich tracts occupy residues 113-127 (GSAT…SNSS) and 182-197 (TEIS…TSAP). The region spanning 128–194 (VVAWNKQQGG…SETSNPQSCT (67 aa)) is the Chitin-binding type-3 2 domain. The span at 198–216 (QPSPDVKPAPDVKPAPDVQ) shows a compositional bias: pro residues. Residues 229–295 (VVAWKGQEGS…SQYGNPGSCS (67 aa)) enclose the Chitin-binding type-3 3 domain. A compositionally biased stretch (pro residues) spans 309–318 (DPTPETPVTP). Positions 322 to 333 (NSEPSTPADSVN) are enriched in polar residues. 2 consecutive Chitin-binding type-3 domains span residues 337–403 (LQAW…TTCE) and 459–529 (AKAW…PQFN). Positions 586–877 (KHVYAPYVDF…TNLSPEFHGL (292 aa)) constitute a GH18 domain. Cysteine 628 and cysteine 673 form a disulfide bridge. Glutamate 700 (proton donor) is an active-site residue.

It belongs to the glycosyl hydrolase 18 family. Chitinase class II subfamily.

Its subcellular location is the periplasm. The enzyme catalyses Random endo-hydrolysis of N-acetyl-beta-D-glucosaminide (1-&gt;4)-beta-linkages in chitin and chitodextrins.. The catalysed reaction is Hydrolysis of (1-&gt;4)-beta-linkages between N-acetylmuramic acid and N-acetyl-D-glucosamine residues in a peptidoglycan and between N-acetyl-D-glucosamine residues in chitodextrins.. Its function is as follows. Bifunctional enzyme with lysozyme/chitinase activity. This chain is Probable bifunctional chitinase/lysozyme (chiA), found in Escherichia coli (strain K12).